Here is a 220-residue protein sequence, read N- to C-terminus: uncharacterized protein (220 aa).

A signal peptide spans 1–25 (MSCGTYKRGSLTFLLVVALAVPVFC).

In terms of tissue distribution, nacreous layer of shell (at protein level). Expressed primarily in the mantle with highest level in the mantle pallium and lower level in the mantle edge.

It localises to the secreted. This is an uncharacterized protein from Margaritifera margaritifera (Freshwater pearl mussel).